The following is a 353-amino-acid chain: Glycerol-3-phosphate dehydrogenase [NAD(+)], cytoplasmic (353 aa).

A Blocked amino end (Ala) modification is found at alanine 2. NAD(+) contacts are provided by residues 11 to 16 (GSGNWG), phenylalanine 98, lysine 121, and alanine 155. Position 121 (lysine 121) interacts with substrate. The active-site Proton acceptor is lysine 206. NAD(+)-binding residues include arginine 270 and glutamine 299. 270–271 (RN) contacts substrate.

This sequence belongs to the NAD-dependent glycerol-3-phosphate dehydrogenase family. As to quaternary structure, homodimer.

Its subcellular location is the cytoplasm. The enzyme catalyses sn-glycerol 3-phosphate + NAD(+) = dihydroxyacetone phosphate + NADH + H(+). Its pathway is phospholipid metabolism; alpha-glycerophosphate cycle. This chain is Glycerol-3-phosphate dehydrogenase [NAD(+)], cytoplasmic, found in Drosophila virilis (Fruit fly).